Consider the following 396-residue polypeptide: Mevalonate kinase (396 aa).

ATP-binding positions include Lys13, Asn55, Ser135, and 140–146 (GAGLGSS). Ser146 functions as the Proton donor in the catalytic mechanism. Residues Ser146 and Glu193 each coordinate Mg(2+). Asp204 acts as the Proton acceptor in catalysis.

The protein belongs to the GHMP kinase family. Mevalonate kinase subfamily. As to quaternary structure, homodimer. Requires Mg(2+) as cofactor.

It localises to the cytoplasm. The protein localises to the peroxisome. The enzyme catalyses (R)-mevalonate + ATP = (R)-5-phosphomevalonate + ADP + H(+). It functions in the pathway isoprenoid biosynthesis; isopentenyl diphosphate biosynthesis via mevalonate pathway; isopentenyl diphosphate from (R)-mevalonate: step 1/3. Farnesyl pyrophosphate and geranyl pyrophosphate inhibit mevalonate kinase activity by binding competitively at the ATP-binding sites. In terms of biological role, catalyzes the phosphorylation of mevalonate to mevalonate 5-phosphate, a key step in isoprenoid and cholesterol biosynthesis. The polypeptide is Mevalonate kinase (Bos taurus (Bovine)).